The following is a 163-amino-acid chain: Glutathione peroxidase 1 (163 aa).

Residue cysteine 36 is part of the active site.

Belongs to the glutathione peroxidase family.

Its subcellular location is the cytoplasm. It catalyses the reaction 2 glutathione + H2O2 = glutathione disulfide + 2 H2O. Functionally, may constitute a glutathione peroxidase-like protective system against oxidative stresses. The polypeptide is Glutathione peroxidase 1 (gpx-1) (Caenorhabditis elegans).